We begin with the raw amino-acid sequence, 301 residues long: Porin (301 aa).

As to quaternary structure, homotrimer.

It is found in the cell outer membrane. Functionally, forms channels that allow the passive diffusion of small hydrophilic solutes up to an exclusion limit of about 0.6 kDa. The chain is Porin from Rhodobacter capsulatus (Rhodopseudomonas capsulata).